A 236-amino-acid chain; its full sequence is tRNA1(Val) (adenine(37)-N6)-methyltransferase (236 aa).

It belongs to the methyltransferase superfamily. tRNA (adenine-N(6)-)-methyltransferase family.

The protein localises to the cytoplasm. It carries out the reaction adenosine(37) in tRNA1(Val) + S-adenosyl-L-methionine = N(6)-methyladenosine(37) in tRNA1(Val) + S-adenosyl-L-homocysteine + H(+). Specifically methylates the adenine in position 37 of tRNA(1)(Val) (anticodon cmo5UAC). In Histophilus somni (strain 2336) (Haemophilus somnus), this protein is tRNA1(Val) (adenine(37)-N6)-methyltransferase.